The chain runs to 220 residues: Ribosomal RNA small subunit methyltransferase G (220 aa).

G78, L83, and R144 together coordinate S-adenosyl-L-methionine.

The protein belongs to the methyltransferase superfamily. RNA methyltransferase RsmG family.

It is found in the cytoplasm. The enzyme catalyses guanosine(527) in 16S rRNA + S-adenosyl-L-methionine = N(7)-methylguanosine(527) in 16S rRNA + S-adenosyl-L-homocysteine. Its function is as follows. Specifically methylates the N7 position of guanine in position 527 of 16S rRNA. This is Ribosomal RNA small subunit methyltransferase G from Alkalilimnicola ehrlichii (strain ATCC BAA-1101 / DSM 17681 / MLHE-1).